Reading from the N-terminus, the 5801-residue chain is uncharacterized protein (5801 aa).

Disordered regions lie at residues 1114 to 1136 (DDDNNNSNNNNNNNNNNNNNKKI), 1827 to 1846 (KDRSSSSSSSYSGGGSSINN), 2040 to 2109 (NNGE…SPLF), 3351 to 3392 (EKSN…NNSG), 5134 to 5168 (DNNNNNNNNNNNNNNNNNNNIDHGDDNNDGESESD), 5478 to 5573 (ISDP…EDII), and 5600 to 5638 (HDKDEEQPEKPQQQEIHQQPEKPQQPEKPQELQSTETPG). 5 stretches are compositionally biased toward low complexity: residues 1118–1134 (NNSNNNNNNNNNNNNNK), 1831–1846 (SSSSSSYSGGGSSINN), 2048–2096 (QQLQ…QQQQ), 3353–3392 (SNNNNNNNNNDNSGNNSGNEIDGSSNGDNNNNNNNNNNSG), and 5135–5153 (NNNNNNNNNNNNNNNNNNN). Over residues 5496 to 5573 (DNEEEEEDDD…EDEDEDEDII (78 aa)) the composition is skewed to acidic residues. Residues 5617–5629 (QQPEKPQQPEKPQ) are compositionally biased toward basic and acidic residues.

This is an uncharacterized protein from Dictyostelium discoideum (Social amoeba).